The primary structure comprises 237 residues: Pyridoxal phosphate homeostasis protein (237 aa).

N6-(pyridoxal phosphate)lysine is present on K35.

The protein belongs to the pyridoxal phosphate-binding protein YggS/PROSC family.

Its function is as follows. Pyridoxal 5'-phosphate (PLP)-binding protein, which is involved in PLP homeostasis. The protein is Pyridoxal phosphate homeostasis protein of Haemophilus influenzae (strain ATCC 51907 / DSM 11121 / KW20 / Rd).